Reading from the N-terminus, the 350-residue chain is MLTERQLLILETIIRDYTDLGQPIGSKTLQEQLPIRVSSATIRNEMAVLEKQGFITKEHSSSGRIPSLKGYRYYVDNLVKPVKIDSKSVRSIQSLFGNEYRRVDEIIEMSAKILSDLTNYTAITLRPEASDLKLEGFRMVPLGNGQVMVILVASDGSVESQIYNLPNNIDGESLEAVIRLINDKLVGSSLSEVTSKLQELQPLLTKYIEKSDGFIDVFGGILDKAIKEQFYIGGRRNLLNFANGNNLEQIKSLYSLIDDESDKIGGLVDNTTNPHDHHGISVKIGDEMSDRLLLDYSLVSATYNVGSHGRGMIAILGPTNMPYSKMIGLVEVFQKELTKKLIDYYRNFDK.

This sequence belongs to the HrcA family.

In terms of biological role, negative regulator of class I heat shock genes (grpE-dnaK-dnaJ and groELS operons). Prevents heat-shock induction of these operons. The sequence is that of Heat-inducible transcription repressor HrcA from Ligilactobacillus salivarius (strain UCC118) (Lactobacillus salivarius).